Consider the following 184-residue polypeptide: Large ribosomal subunit protein uL5 (184 aa).

It belongs to the universal ribosomal protein uL5 family. Part of the 50S ribosomal subunit; part of the 5S rRNA/L5/L18/L25 subcomplex. Contacts the 5S rRNA and the P site tRNA. Forms a bridge to the 30S subunit in the 70S ribosome.

This is one of the proteins that bind and probably mediate the attachment of the 5S RNA into the large ribosomal subunit, where it forms part of the central protuberance. In the 70S ribosome it contacts protein S13 of the 30S subunit (bridge B1b), connecting the 2 subunits; this bridge is implicated in subunit movement. Contacts the P site tRNA; the 5S rRNA and some of its associated proteins might help stabilize positioning of ribosome-bound tRNAs. This is Large ribosomal subunit protein uL5 from Wolinella succinogenes (strain ATCC 29543 / DSM 1740 / CCUG 13145 / JCM 31913 / LMG 7466 / NCTC 11488 / FDC 602W) (Vibrio succinogenes).